The primary structure comprises 193 residues: Probable GTP-binding protein EngB (193 aa).

The EngB-type G domain maps to 22–193 (MYPEISFIGR…ELWQIIEDLL (172 aa)). Residues 30–37 (GRSNVGKS), 57–61 (GKTRT), 75–78 (DLPG), 142–145 (TKMD), and 174–176 (FSS) each bind GTP. Ser-37 and Thr-59 together coordinate Mg(2+).

It belongs to the TRAFAC class TrmE-Era-EngA-EngB-Septin-like GTPase superfamily. EngB GTPase family. It depends on Mg(2+) as a cofactor.

Its function is as follows. Necessary for normal cell division and for the maintenance of normal septation. The protein is Probable GTP-binding protein EngB of Natranaerobius thermophilus (strain ATCC BAA-1301 / DSM 18059 / JW/NM-WN-LF).